We begin with the raw amino-acid sequence, 804 residues long: Tegument protein UL47 homolog (804 aa).

The span at 1–15 (MQSGHYNRRQSRRQR) shows a compositional bias: basic residues. 2 disordered regions span residues 1–42 (MQSG…THPP) and 58–206 (LNSE…DYFS). The Nuclear localization signal motif lies at 11 to 31 (SRRQRISSNTTDSPRHTHGTR). Over residues 32-42 (YRSTNWYTHPP) the composition is skewed to polar residues. Acidic residues predominate over residues 62-72 (MDQDSSSDASD). Residues 82–93 (STYNGSEQNTST) are compositionally biased toward polar residues. The span at 94–109 (SRHENRIFKLTEREAN) shows a compositional bias: basic and acidic residues. Tandem repeats lie at residues 117-132 (DAID…EAEE), 133-148 (DAID…EAEE), and 149-164 (DAID…EAEE). A 6 X 16 AA approximate tandem repeats region spans residues 117–203 (DAIDDEGEAE…IDDEGEAEED (87 aa)). Residues 118-204 (AIDDEGEAEE…DDEGEAEEDY (87 aa)) show a composition bias toward acidic residues. The 1-4; truncated repeat unit spans residues 170-180 (DAIDDEGEAEE). The 1-5; truncated repeat unit spans residues 181 to 191 (DAIDDEGEAEE). The stretch at 192–203 (DAIDDEGEAEED) is one 1-6; truncated repeat. The short motif at 770–792 (QPIPSVDLAENLMQYRNEILGLD) is the Nuclear export signal element.

The protein belongs to the alphaherpesvirinae HHV-1 UL47 family. As to quaternary structure, interacts with US3 kinase. Interacts with ORF24 and ORF27; these interactions seem important for efficient virion nuclear egress. Interacts with ORF17/VHS. Post-translationally, phosphorylated by US3. This phosphorylation is required for proper nuclear localization.

It localises to the virion tegument. The protein resides in the host nucleus. Its subcellular location is the host cytoplasm. Functionally, tegument protein that can bind to various RNA transcripts. Plays a role in the attenuation of selective viral and cellular mRNA degradation by modulating the activity of host shutoff RNase ORF17/VHS. Also plays a role in the primary envelopment of virions in the perinuclear space, probably by interacting with two nuclear egress proteins ORF24 and ORF27. In Varicella-zoster virus (strain Oka vaccine) (HHV-3), this protein is Tegument protein UL47 homolog.